Reading from the N-terminus, the 259-residue chain is Methionine aminopeptidase (259 aa).

Residue His78 participates in substrate binding. A divalent metal cation-binding residues include Asp95, Asp106, and His169. His176 is a binding site for substrate. An a divalent metal cation-binding site is contributed by Glu202. Residue Trp220 participates in substrate binding. Residue Glu234 participates in a divalent metal cation binding.

The protein belongs to the peptidase M24A family. Methionine aminopeptidase type 1 subfamily. Monomer. It depends on Co(2+) as a cofactor. Zn(2+) is required as a cofactor. The cofactor is Mn(2+). Fe(2+) serves as cofactor.

The enzyme catalyses Release of N-terminal amino acids, preferentially methionine, from peptides and arylamides.. Removes the N-terminal methionine from nascent proteins. The N-terminal methionine is often cleaved when the second residue in the primary sequence is small and uncharged (Met-Ala-, Cys, Gly, Pro, Ser, Thr, or Val). Requires deformylation of the N(alpha)-formylated initiator methionine before it can be hydrolyzed. The chain is Methionine aminopeptidase from Rickettsia prowazekii (strain Madrid E).